A 121-amino-acid chain; its full sequence is Small ribosomal subunit protein uS13 (121 aa).

Residues 91 to 121 (HRMSLPVRGQRTRTNARTRRGSRKTVAGRKK) are disordered. The span at 100–121 (QRTRTNARTRRGSRKTVAGRKK) shows a compositional bias: basic residues.

The protein belongs to the universal ribosomal protein uS13 family. As to quaternary structure, part of the 30S ribosomal subunit. Forms a loose heterodimer with protein S19. Forms two bridges to the 50S subunit in the 70S ribosome.

Its function is as follows. Located at the top of the head of the 30S subunit, it contacts several helices of the 16S rRNA. In the 70S ribosome it contacts the 23S rRNA (bridge B1a) and protein L5 of the 50S subunit (bridge B1b), connecting the 2 subunits; these bridges are implicated in subunit movement. Contacts the tRNAs in the A and P-sites. The sequence is that of Small ribosomal subunit protein uS13 from Prochlorococcus marinus (strain MIT 9211).